The chain runs to 596 residues: Inactive metallocarboxypeptidase ecm14 (596 aa).

Positions 1-26 (MSQSHSILSSLILLVAIIFCVPHVIA) are cleaved as a signal peptide. Positions 27–190 (VPWTTDGHAQ…SYPSMAYADA (164 aa)) are excised as a propeptide. N114 carries an N-linked (GlcNAc...) asparagine glycan. The region spanning 220-540 (NYQPLSVIIP…NVIKYFGDFL (321 aa)) is the Peptidase M14 domain. Zn(2+) is bound by residues H285 and E288. Residues 285 to 288 (HARE), R343, and 360 to 361 (DR) each bind substrate. A disulfide bond links C354 and C376. N400 carries N-linked (GlcNAc...) asparagine glycosylation. H416 provides a ligand contact to Zn(2+). Residue 417-418 (SY) participates in substrate binding.

Belongs to the peptidase M14 family. The cofactor is Zn(2+).

The protein resides in the vacuole. It localises to the secreted. Inactive carboxypeptidase that may play a role in cell wall organization and biogenesis. This is Inactive metallocarboxypeptidase ecm14 (ecm14) from Sclerotinia sclerotiorum (strain ATCC 18683 / 1980 / Ss-1) (White mold).